The sequence spans 368 residues: Probable dual-specificity RNA methyltransferase RlmN (368 aa).

The active-site Proton acceptor is E108. Residues 114–345 (HAYGNSVCVS…VTVRRGLGAD (232 aa)) form the Radical SAM core domain. A disulfide bridge links C121 with C350. [4Fe-4S] cluster is bound by residues C128, C132, and C135. S-adenosyl-L-methionine is bound by residues 175-176 (GE), S207, 230-232 (SLH), and N307. The S-methylcysteine intermediate role is filled by C350.

The protein belongs to the radical SAM superfamily. RlmN family. Requires [4Fe-4S] cluster as cofactor.

It is found in the cytoplasm. The enzyme catalyses adenosine(2503) in 23S rRNA + 2 reduced [2Fe-2S]-[ferredoxin] + 2 S-adenosyl-L-methionine = 2-methyladenosine(2503) in 23S rRNA + 5'-deoxyadenosine + L-methionine + 2 oxidized [2Fe-2S]-[ferredoxin] + S-adenosyl-L-homocysteine. The catalysed reaction is adenosine(37) in tRNA + 2 reduced [2Fe-2S]-[ferredoxin] + 2 S-adenosyl-L-methionine = 2-methyladenosine(37) in tRNA + 5'-deoxyadenosine + L-methionine + 2 oxidized [2Fe-2S]-[ferredoxin] + S-adenosyl-L-homocysteine. Its function is as follows. Specifically methylates position 2 of adenine 2503 in 23S rRNA and position 2 of adenine 37 in tRNAs. This Pelotomaculum thermopropionicum (strain DSM 13744 / JCM 10971 / SI) protein is Probable dual-specificity RNA methyltransferase RlmN.